The primary structure comprises 365 residues: UDP-N-acetylglucosamine--N-acetylmuramyl-(pentapeptide) pyrophosphoryl-undecaprenol N-acetylglucosamine transferase (365 aa).

UDP-N-acetyl-alpha-D-glucosamine is bound by residues Thr10–Gly12, Asn128, Arg170, Ser199, Ile250, and Gln295.

It belongs to the glycosyltransferase 28 family. MurG subfamily.

The protein localises to the cell inner membrane. It catalyses the reaction di-trans,octa-cis-undecaprenyl diphospho-N-acetyl-alpha-D-muramoyl-L-alanyl-D-glutamyl-meso-2,6-diaminopimeloyl-D-alanyl-D-alanine + UDP-N-acetyl-alpha-D-glucosamine = di-trans,octa-cis-undecaprenyl diphospho-[N-acetyl-alpha-D-glucosaminyl-(1-&gt;4)]-N-acetyl-alpha-D-muramoyl-L-alanyl-D-glutamyl-meso-2,6-diaminopimeloyl-D-alanyl-D-alanine + UDP + H(+). It functions in the pathway cell wall biogenesis; peptidoglycan biosynthesis. Functionally, cell wall formation. Catalyzes the transfer of a GlcNAc subunit on undecaprenyl-pyrophosphoryl-MurNAc-pentapeptide (lipid intermediate I) to form undecaprenyl-pyrophosphoryl-MurNAc-(pentapeptide)GlcNAc (lipid intermediate II). The protein is UDP-N-acetylglucosamine--N-acetylmuramyl-(pentapeptide) pyrophosphoryl-undecaprenol N-acetylglucosamine transferase of Prosthecochloris aestuarii (strain DSM 271 / SK 413).